Reading from the N-terminus, the 312-residue chain is Terpene synthase 8 (312 aa).

The DDxx(x)D/E motif signature appears at 96–101 (DDYIYE). The NDxxSxxxD/E motif signature appears at 224-232 (NDCGSFKME).

This sequence belongs to the terpene synthase family.

It catalyses the reaction (2E,6E)-farnesyl diphosphate + H2O = discoidol + diphosphate. Its pathway is sesquiterpene biosynthesis. Terpene synthase; part of the gene cluster that mediates the biosynthesis of the trisnorsesquiterpene discodiene which has a function during later stages of multicellular development, during the transition from fingers to Mexican hats. The terpene synthase tps8 converts its substrate farnesyl diphosphate (FDP) into the bicyclic sesquiterpene alcohol discoidol. The cytochrome P450 monooxygenase cyp521A1 then catalyzes the oxidative degradation of discoidol to form the trisnorsesquiterpene discodiene. This chain is Terpene synthase 8, found in Dictyostelium discoideum (Social amoeba).